A 457-amino-acid polypeptide reads, in one-letter code: UDP-N-acetylmuramoylalanine--D-glutamate ligase (457 aa).

An ATP-binding site is contributed by 116–122 (GTNGKTT).

The protein belongs to the MurCDEF family.

The protein localises to the cytoplasm. The catalysed reaction is UDP-N-acetyl-alpha-D-muramoyl-L-alanine + D-glutamate + ATP = UDP-N-acetyl-alpha-D-muramoyl-L-alanyl-D-glutamate + ADP + phosphate + H(+). It participates in cell wall biogenesis; peptidoglycan biosynthesis. In terms of biological role, cell wall formation. Catalyzes the addition of glutamate to the nucleotide precursor UDP-N-acetylmuramoyl-L-alanine (UMA). The polypeptide is UDP-N-acetylmuramoylalanine--D-glutamate ligase (Caldicellulosiruptor bescii (strain ATCC BAA-1888 / DSM 6725 / KCTC 15123 / Z-1320) (Anaerocellum thermophilum)).